Consider the following 1146-residue polypeptide: Killer toxin subunits alpha/beta (1146 aa).

An N-terminal signal peptide occupies residues 1–17 (MNIFYIFLFLLSFVQGL). The propeptide occupies 18-29 (EHTHRRGSLVKR). LysM domains follow at residues 205–234 (ADQSGINGESLQGYNPNLDFSKLSAGQPIC) and 254–303 (KTYK…NLCV). In terms of domain architecture, Chitin-binding type-1 spans 316–372 (IAECGPLAPGEKYNAKCPLNACCSEFGFCGLTKDYCDKKSSTTGAPGTDGCFSNCGY). 4 disulfides stabilise this stretch: Cys-319-Cys-338, Cys-332-Cys-344, Cys-337-Cys-351, and Cys-366-Cys-370. The GH18 domain maps to 383–735 (FKKIAYWLDA…DDTEDPFDEE (353 aa)). Residues Ile-424 and 447-450 (GGWD) each bind chitin. The Proton donor role is filled by Glu-495. Chitin-binding positions include Tyr-496, 562–565 (MTYD), and Trp-707. Asn-771, Asn-858, Asn-868, Asn-876, and Asn-1117 each carry an N-linked (GlcNAc...) asparagine glycan.

It belongs to the glycosyl hydrolase 18 family. In terms of assembly, the killer toxin is composed of three subunits: alpha, beta and gamma. In terms of processing, RF2 is potentially split by membrane-bound basic amino acid-specific peptidase to yield the alpha and beta subunits.

The enzyme catalyses Random endo-hydrolysis of N-acetyl-beta-D-glucosaminide (1-&gt;4)-beta-linkages in chitin and chitodextrins.. Functionally, the alpha subunit is a potent exochitinase. Along with the beta subunit it plays a role in the initial interaction of the toxin with sensitive cells and allow the gamma subunit (the active toxin) to gain entry into the cell. The protein is Killer toxin subunits alpha/beta of Kluyveromyces lactis (strain ATCC 8585 / CBS 2359 / DSM 70799 / NBRC 1267 / NRRL Y-1140 / WM37) (Yeast).